Reading from the N-terminus, the 218-residue chain is 2-phospho-L-lactate guanylyltransferase (218 aa).

The protein belongs to the CofC family. Homodimer.

The enzyme catalyses (2S)-2-phospholactate + GTP + H(+) = (2S)-lactyl-2-diphospho-5'-guanosine + diphosphate. The protein operates within cofactor biosynthesis; coenzyme F420 biosynthesis. Guanylyltransferase that catalyzes the activation of (2S)-2-phospholactate (2-PL) as (2S)-lactyl-2-diphospho-5'-guanosine, via the condensation of 2-PL with GTP. It is involved in the biosynthesis of coenzyme F420, a hydride carrier cofactor. The sequence is that of 2-phospho-L-lactate guanylyltransferase from Methanocaldococcus fervens (strain DSM 4213 / JCM 15782 / AG86) (Methanococcus fervens).